The following is a 589-amino-acid chain: ATP-dependent lipid A-core flippase (589 aa).

The next 5 helical transmembrane spans lie at 29–49, 70–90, 157–177, 261–281, and 283–303; these read LLLV…TGFL, WLPV…YITD, VIGA…TILV, MIGA…ALAG, and LTAG…PGLK. The 283-residue stretch at 32–314 folds into the ABC transmembrane type-1 domain; the sequence is VAALIAALIE…LTNVQNMVQR (283 aa). The ABC transporter domain maps to 346-582; it reads IEFRDVTARY…GGLYSHLHGM (237 aa). 380-387 lines the ATP pocket; the sequence is GRSGSGKS.

It belongs to the ABC transporter superfamily. Lipid exporter (TC 3.A.1.106) family. Homodimer.

The protein resides in the cell inner membrane. It carries out the reaction ATP + H2O + lipid A-core oligosaccharideSide 1 = ADP + phosphate + lipid A-core oligosaccharideSide 2.. In terms of biological role, involved in lipopolysaccharide (LPS) biosynthesis. Translocates lipid A-core from the inner to the outer leaflet of the inner membrane. Transmembrane domains (TMD) form a pore in the inner membrane and the ATP-binding domain (NBD) is responsible for energy generation. The chain is ATP-dependent lipid A-core flippase from Xanthomonas oryzae pv. oryzae (strain MAFF 311018).